The following is an 85-amino-acid chain: uncharacterized protein (85 aa).

The signal sequence occupies residues 1–20; the sequence is MIKLFCVLAAFISINSACQS.

This is an uncharacterized protein from Invertebrate iridescent virus 6 (IIV-6).